Reading from the N-terminus, the 464-residue chain is tRNA-2-methylthio-N(6)-dimethylallyladenosine synthase (464 aa).

The segment at 1-24 (MSDLVPLSRKPAPAAGGPAPSPAA) is disordered. Positions 8-18 (SRKPAPAAGGP) are enriched in low complexity. The region spanning 27 to 142 (RKVYVHTFGC…LPEMVERARD (116 aa)) is the MTTase N-terminal domain. Cysteine 36, cysteine 72, cysteine 105, cysteine 180, cysteine 184, and cysteine 187 together coordinate [4Fe-4S] cluster. The Radical SAM core domain maps to 166 to 398 (ARGRVTAFVT…LAAQRRIAGE (233 aa)). Residues 401-464 (AGELGKVVEV…GGSSLSGTLA (64 aa)) form the TRAM domain.

Belongs to the methylthiotransferase family. MiaB subfamily. In terms of assembly, monomer. Requires [4Fe-4S] cluster as cofactor.

It is found in the cytoplasm. It carries out the reaction N(6)-dimethylallyladenosine(37) in tRNA + (sulfur carrier)-SH + AH2 + 2 S-adenosyl-L-methionine = 2-methylsulfanyl-N(6)-dimethylallyladenosine(37) in tRNA + (sulfur carrier)-H + 5'-deoxyadenosine + L-methionine + A + S-adenosyl-L-homocysteine + 2 H(+). Catalyzes the methylthiolation of N6-(dimethylallyl)adenosine (i(6)A), leading to the formation of 2-methylthio-N6-(dimethylallyl)adenosine (ms(2)i(6)A) at position 37 in tRNAs that read codons beginning with uridine. This Anaeromyxobacter sp. (strain K) protein is tRNA-2-methylthio-N(6)-dimethylallyladenosine synthase.